A 20-amino-acid polypeptide reads, in one-letter code: Photosystem II stability/assembly factor HCF136, chloroplastic (20 aa).

Belongs to the Ycf48 family.

It is found in the plastid. The protein resides in the chloroplast thylakoid lumen. In terms of biological role, essential for photosystem II (PSII) biogenesis; required for assembly of an early intermediate in PSII assembly that includes D2 (psbD) and cytochrome b559. The polypeptide is Photosystem II stability/assembly factor HCF136, chloroplastic (Spinacia oleracea (Spinach)).